A 921-amino-acid chain; its full sequence is TRPM8 channel-associated factor 1 (921 aa).

The 300-residue stretch at 542-841 (YCWMSTGLYI…TYLQLQEAFG (300 aa)) folds into the Peptidase M60 domain.

Belongs to the TCAF family. In terms of assembly, interacts with TRPM8 (via N-terminus and C-terminus domains); the interaction inhibits TRPM8 channel activity. Interacts with TRPV6. In terms of tissue distribution, isoform 2 is expressed in the prostate and strongly expressed in cancerous prostate samples.

It localises to the cell membrane. Positively regulates the plasma membrane cation channel TRPM8 activity. Involved in the recruitment of TRPM8 to the cell surface. Promotes prostate cancer cell migration inhibition in a TRPM8-dependent manner. This is TRPM8 channel-associated factor 1 from Homo sapiens (Human).